The primary structure comprises 133 residues: Small ribosomal subunit protein uS8 (133 aa).

Positions 1-29 are disordered; it reads MANHDPISDMLTRIRNASEKRHETTRIPA. Basic and acidic residues predominate over residues 16 to 25; the sequence is NASEKRHETT.

It belongs to the universal ribosomal protein uS8 family. As to quaternary structure, part of the 30S ribosomal subunit. Contacts proteins S5 and S12.

In terms of biological role, one of the primary rRNA binding proteins, it binds directly to 16S rRNA central domain where it helps coordinate assembly of the platform of the 30S subunit. This Prochlorococcus marinus (strain MIT 9211) protein is Small ribosomal subunit protein uS8.